The chain runs to 708 residues: Soluble guanylate cyclase gcy-37 (708 aa).

Heme is bound at residue histidine 105. The stretch at 368-409 (LNQSRICQMELNKKLEETMKKMKKMTEELEVKKSQTDRLLFE) forms a coiled coil. A Guanylate cyclase domain is found at 434-562 (SVIFTDIPDF…NTVNVTKSIC (129 aa)). Mg(2+)-binding residues include aspartate 439 and aspartate 483.

It belongs to the adenylyl cyclase class-4/guanylyl cyclase family. As to quaternary structure, heterodimer; with other soluble guanylate cyclases. The cofactor is heme. Expressed in a small number of neurons, corresponding to URX, AQR and PQR neurons.

It localises to the cytoplasm. It catalyses the reaction GTP = 3',5'-cyclic GMP + diphosphate. Its activity is regulated as follows. May be regulated by molecular oxygen. Probably not activated by nitric oxide (NO). Functionally, synthesizes cyclic GMP (cGMP) from GTP. May play a role in sensory neurons. The sequence is that of Soluble guanylate cyclase gcy-37 (gcy-37) from Caenorhabditis elegans.